Reading from the N-terminus, the 303-residue chain is MTSRTEAVKAYLLDLQDRICSALETEDGGARFVEDAWVREAGGGGRTRVIGDGKVIEKGGVNFSHVFGAGLPPSASAHRPELAGRGFEALGVSLVIHPHNPHVPTSHANVRFFIAEKEGEEAVWWFGGGFDLTPYYGNEEDCIHWHRVAEQACAPFGADVYPRYKAWCDRYFHLKHRGEPRGIGGLFFDDLNEWDFDTCFAFIRAIGDAYVNAYLPIVQRRKDTPYTPQQREFQEYRRGRYVEFNLVYDRGTLFGLQSGGRTESILMSLPPQVRWGYDWKAAPGSEEARLTEYFLQDRDWLGQ.

Ser-93 lines the substrate pocket. A divalent metal cation contacts are provided by His-97 and His-107. Catalysis depends on His-107, which acts as the Proton donor. 109–111 provides a ligand contact to substrate; it reads NVR. A divalent metal cation-binding residues include His-146 and His-176. Residues 241 to 276 form an important for dimerization region; sequence YVEFNLVYDRGTLFGLQSGGRTESILMSLPPQVRWG. 259–261 is a binding site for substrate; the sequence is GGR.

It belongs to the aerobic coproporphyrinogen-III oxidase family. In terms of assembly, homodimer. It depends on a divalent metal cation as a cofactor.

The protein localises to the cytoplasm. It catalyses the reaction coproporphyrinogen III + O2 + 2 H(+) = protoporphyrinogen IX + 2 CO2 + 2 H2O. It participates in porphyrin-containing compound metabolism; protoporphyrin-IX biosynthesis; protoporphyrinogen-IX from coproporphyrinogen-III (O2 route): step 1/1. Its function is as follows. Involved in the heme biosynthesis. Catalyzes the aerobic oxidative decarboxylation of propionate groups of rings A and B of coproporphyrinogen-III to yield the vinyl groups in protoporphyrinogen-IX. This chain is Oxygen-dependent coproporphyrinogen-III oxidase, found in Pseudomonas putida (strain GB-1).